Consider the following 898-residue polypeptide: Alanine--tRNA ligase (898 aa).

Zn(2+)-binding residues include His582, His586, Cys685, and His689.

Belongs to the class-II aminoacyl-tRNA synthetase family. Zn(2+) serves as cofactor.

Its subcellular location is the cytoplasm. It carries out the reaction tRNA(Ala) + L-alanine + ATP = L-alanyl-tRNA(Ala) + AMP + diphosphate. Catalyzes the attachment of alanine to tRNA(Ala) in a two-step reaction: alanine is first activated by ATP to form Ala-AMP and then transferred to the acceptor end of tRNA(Ala). Also edits incorrectly charged Ser-tRNA(Ala) and Gly-tRNA(Ala) via its editing domain. This chain is Alanine--tRNA ligase, found in Mycolicibacterium gilvum (strain PYR-GCK) (Mycobacterium gilvum (strain PYR-GCK)).